Here is a 431-residue protein sequence, read N- to C-terminus: Trigger factor (431 aa).

One can recognise a PPIase FKBP-type domain in the interval 164–249; it reads GDIAVIDFKG…IKEIKRKELP (86 aa).

Belongs to the FKBP-type PPIase family. Tig subfamily.

The protein localises to the cytoplasm. It carries out the reaction [protein]-peptidylproline (omega=180) = [protein]-peptidylproline (omega=0). Involved in protein export. Acts as a chaperone by maintaining the newly synthesized protein in an open conformation. Functions as a peptidyl-prolyl cis-trans isomerase. This chain is Trigger factor, found in Clostridium acetobutylicum (strain ATCC 824 / DSM 792 / JCM 1419 / IAM 19013 / LMG 5710 / NBRC 13948 / NRRL B-527 / VKM B-1787 / 2291 / W).